We begin with the raw amino-acid sequence, 95 residues long: MSVDAVTVRKIAHLARIKVNDADVPHVQEELNAILAFVEQLASVDVEGVEPMTSVMPMPMTKREDIVTDGGIADAIVANAPATEDHFFVVPKVVE.

This sequence belongs to the GatC family. Heterotrimer of A, B and C subunits.

The enzyme catalyses L-glutamyl-tRNA(Gln) + L-glutamine + ATP + H2O = L-glutaminyl-tRNA(Gln) + L-glutamate + ADP + phosphate + H(+). The catalysed reaction is L-aspartyl-tRNA(Asn) + L-glutamine + ATP + H2O = L-asparaginyl-tRNA(Asn) + L-glutamate + ADP + phosphate + 2 H(+). In terms of biological role, allows the formation of correctly charged Asn-tRNA(Asn) or Gln-tRNA(Gln) through the transamidation of misacylated Asp-tRNA(Asn) or Glu-tRNA(Gln) in organisms which lack either or both of asparaginyl-tRNA or glutaminyl-tRNA synthetases. The reaction takes place in the presence of glutamine and ATP through an activated phospho-Asp-tRNA(Asn) or phospho-Glu-tRNA(Gln). The protein is Aspartyl/glutamyl-tRNA(Asn/Gln) amidotransferase subunit C of Beijerinckia indica subsp. indica (strain ATCC 9039 / DSM 1715 / NCIMB 8712).